The primary structure comprises 252 residues: Imidazole glycerol phosphate synthase subunit HisF (252 aa).

Residues D11 and D130 contribute to the active site.

It belongs to the HisA/HisF family. In terms of assembly, heterodimer of HisH and HisF.

The protein resides in the cytoplasm. The catalysed reaction is 5-[(5-phospho-1-deoxy-D-ribulos-1-ylimino)methylamino]-1-(5-phospho-beta-D-ribosyl)imidazole-4-carboxamide + L-glutamine = D-erythro-1-(imidazol-4-yl)glycerol 3-phosphate + 5-amino-1-(5-phospho-beta-D-ribosyl)imidazole-4-carboxamide + L-glutamate + H(+). Its pathway is amino-acid biosynthesis; L-histidine biosynthesis; L-histidine from 5-phospho-alpha-D-ribose 1-diphosphate: step 5/9. In terms of biological role, IGPS catalyzes the conversion of PRFAR and glutamine to IGP, AICAR and glutamate. The HisF subunit catalyzes the cyclization activity that produces IGP and AICAR from PRFAR using the ammonia provided by the HisH subunit. This is Imidazole glycerol phosphate synthase subunit HisF from Pelotomaculum thermopropionicum (strain DSM 13744 / JCM 10971 / SI).